We begin with the raw amino-acid sequence, 310 residues long: Coproporphyrin III ferrochelatase (310 aa).

Tyr-13 contacts Fe-coproporphyrin III. Tyr-13 provides a ligand contact to N-methylmesoporphyrin. A Mg(2+)-binding site is contributed by Glu-20. Arg-30 serves as a coordination point for Fe-coproporphyrin III. Arg-31–Arg-33 serves as a coordination point for N-methylmesoporphyrin. Arg-46 is a Mg(2+) binding site. Fe-coproporphyrin III is bound by residues Arg-46–Tyr-47, Ser-54, and Tyr-125. His-183 and Lys-188 together coordinate N-methylmesoporphyrin. His-183 provides a ligand contact to Fe(2+). Glu-264 serves as a coordination point for Fe(2+). Asp-268 and Glu-272 together coordinate Mg(2+).

The protein belongs to the ferrochelatase family. In terms of assembly, monomer. Interacts with frataxin/Fra.

The protein localises to the cytoplasm. The catalysed reaction is Fe-coproporphyrin III + 2 H(+) = coproporphyrin III + Fe(2+). It participates in porphyrin-containing compound metabolism; protoheme biosynthesis. Its activity is regulated as follows. Stimulated by Mg(2+). Inhibited by Cd(2+). Inhibited by N-methylmesoporphyrin (N-MeMP) and 2,4-disulfonic acid deuteroporphyrin IX (dSDP). Its function is as follows. Involved in coproporphyrin-dependent heme b biosynthesis. Catalyzes the insertion of ferrous iron into coproporphyrin III to form Fe-coproporphyrin III. It can also insert iron into protoporphyrin IX. Has weaker activity with 2,4 disulfonate, deuteroporphyrin and 2,4 hydroxyethyl. In vitro, can also use Zn(2+) or Cu(2+). The chain is Coproporphyrin III ferrochelatase from Bacillus subtilis (strain 168).